Reading from the N-terminus, the 746-residue chain is Histone-lysine N-methyltransferase EZH2 (746 aa).

Positions 1 to 340 are interaction with DNMT1, DNMT3A and DNMT3B; sequence MGQTGKKSEK…AKEFAAALTA (340 aa). Ser-21 carries the post-translational modification Phosphoserine; by PKB/AKT1. The segment at 39–68 is interaction with EED; sequence KTMFSSNRQKILERTETLNQEWKQRRIQPV. Ser-75 carries an O-linked (GlcNAc) serine glycan. Ser-76 carries the post-translational modification Phosphoserine. The disordered stretch occupies residues 180 to 217; the sequence is QYNDDDDDDDGDDPDEREEKQKDLEDNRDDKETCPPRK. Acidic residues predominate over residues 182–195; it reads NDDDDDDDGDDPDE. Positions 196-217 are enriched in basic and acidic residues; the sequence is REEKQKDLEDNRDDKETCPPRK. The tract at residues 329–522 is interaction with CDYL; the sequence is EGAKEFAAAL…SSNHVYNYQP (194 aa). The residue at position 339 (Thr-339) is a Phosphothreonine. The segment at 340 to 426 is disordered; it reads AERIKTPPKR…PIKMKPNIEP (87 aa). Thr-345 carries the phosphothreonine; by CDK1 and CDK2 modification. A compositionally biased stretch (basic residues) spans 345-357; it reads TPPKRPGGRRRGR. Phosphoserine is present on residues Ser-363 and Ser-366. At Thr-367 the chain carries Phosphothreonine. Positions 374–385 are enriched in basic and acidic residues; it reads ESKDTDSDREAG. Thr-487 carries the post-translational modification Phosphothreonine. One can recognise a CXC domain in the interval 503–605; it reads CRKIQLKKDG…SKNVSCKNCS (103 aa). The SET domain occupies 612 to 727; it reads KHLLLAPSDV…TGEELFFDYR (116 aa). A Glycyl lysine isopeptide (Lys-Gly) (interchain with G-Cter in SUMO2) cross-link involves residue Lys-634.

This sequence belongs to the class V-like SAM-binding methyltransferase superfamily. Histone-lysine methyltransferase family. EZ subfamily. In terms of assembly, component of the PRC2/EED-EZH2 complex, which includes EED, EZH2, SUZ12, RBBP4 and RBBP7 and possibly AEBP2. The minimum components required for methyltransferase activity of the PRC2/EED-EZH2 complex are EED, EZH2 and SUZ12. The PRC2 complex may also interact with DNMT1, DNMT3A, DNMT3B and PHF1 via the EZH2 subunit and with SIRT1 via the SUZ12 subunit. Interacts with HDAC1 and HDAC2. Binds ATRX via the SET domain. Interacts with PRAME. Interacts with CDYL. Interacts with EED. Interacts with BMAL1. Interacts with CLOCK and CRY1. Interacts with DNMT3L; the interaction is direct. Interacts with EZHIP; the interaction blocks EZH2 methyltransferase activity. Interacts with ZNF263; recruited to the SIX3 promoter along with other proteins involved in chromatin modification and transcriptional corepression where it contributes to transcriptional repression. Interacts with ARMC12. Interacts with ZMYND8; the interaction is dependent on the presence of chromatin. Interacts with DDX18; this interaction inhibits the PRC2 complex. Post-translationally, phosphorylated by AKT1. Phosphorylation by AKT1 reduces methyltransferase activity. Phosphorylation at Thr-345 by CDK1 and CDK2 promotes maintenance of H3K27me3 levels at EZH2-target loci, thus leading to epigenetic gene silencing. In terms of processing, sumoylated. Glycosylated: O-GlcNAcylation at Ser-75 by OGT increases stability of EZH2 and facilitates the formation of H3K27me3 by the PRC2/EED-EZH2 complex. Present in actively dividing cells. Widely expressed in early embryos. In later embryogenesis, expression restricted to central and peripheral nervous system, liver and thymus. In adult, highest expression in spleen, testis and placenta. Lower levels in intestine, muscle and ovary and very low levels in brain and liver. No expression in heart, thyroid gland, lung and kidney.

Its subcellular location is the nucleus. It localises to the chromosome. The catalysed reaction is L-lysyl(27)-[histone H3] + 3 S-adenosyl-L-methionine = N(6),N(6),N(6)-trimethyl-L-lysyl(27)-[histone H3] + 3 S-adenosyl-L-homocysteine + 3 H(+). In terms of biological role, polycomb group (PcG) protein. Catalytic subunit of the PRC2/EED-EZH2 complex, which methylates (H3K9me) and 'Lys-27' (H3K27me) of histone H3, leading to transcriptional repression of the affected target gene. Able to mono-, di- and trimethylate 'Lys-27' of histone H3 to form H3K27me1, H3K27me2 and H3K27me3, respectively. Displays a preference for substrates with less methylation, loses activity when progressively more methyl groups are incorporated into H3K27, H3K27me0 &gt; H3K27me1 &gt; H3K27me2. Compared to EZH1-containing complexes, it is more abundant in embryonic stem cells and plays a major role in forming H3K27me3, which is required for embryonic stem cell identity and proper differentiation. The PRC2/EED-EZH2 complex may also serve as a recruiting platform for DNA methyltransferases, thereby linking two epigenetic repression systems. Genes repressed by the PRC2/EED-EZH2 complex include HOXA7, HOXB6 and HOXC8. EZH2 can also methylate non-histone proteins such as the transcription factor GATA4 and the nuclear receptor RORA. Regulates the circadian clock via histone methylation at the promoter of the circadian genes. Essential for the CRY1/2-mediated repression of the transcriptional activation of PER1/2 by the CLOCK-BMAL1 heterodimer; involved in the di and trimethylation of 'Lys-27' of histone H3 on PER1/2 promoters which is necessary for the CRY1/2 proteins to inhibit transcription. The sequence is that of Histone-lysine N-methyltransferase EZH2 from Mus musculus (Mouse).